The sequence spans 254 residues: Switch-activating protein 1 (254 aa).

Residues 1–10 show a composition bias toward basic and acidic residues; sequence MEAPKMELKS. The interval 1 to 30 is disordered; that stretch reads MEAPKMELKSYKRKNASLSPSSSPAKAQRT. Low complexity predominate over residues 16 to 25; it reads ASLSPSSSPA. 2 positions are modified to phosphoserine: Ser-17 and Ser-19. 4 repeat units span residues 221 to 224, 225 to 228, 229 to 232, and 233 to 236. Residues 221-236 form a 4 X 4 AA tandem repeats of G-[ATV]-N-M region; sequence GVNMGTNMGANMGANM.

As to quaternary structure, homodimer.

It is found in the nucleus. In terms of biological role, binds to sequences required for mating-type switching. Makes a simultaneous contact with both the alpha and beta domains of the switch-activating site SAS1. Also binds to replication fork barrier 1 (RFB1) located within a 78 base pair sequence near the 3' end of the rRNA coding region. This leads to replication fork blockage. It binds the consensus sequence 5'-TA[AG]GCAGNTN[CT]AACG[AC]G-3'. Functionally, has a role in chromosome organization and integrity where it is involved in chromosome segregation. Has a role in sister chromatid cohesion and condensation. The sequence is that of Switch-activating protein 1 (sap1) from Schizosaccharomyces pombe (strain 972 / ATCC 24843) (Fission yeast).